A 290-amino-acid chain; its full sequence is Diaminopimelate epimerase (290 aa).

Substrate-binding residues include asparagine 17, glutamine 49, and asparagine 69. Cysteine 78 functions as the Proton donor in the catalytic mechanism. Residues 79–80 (GN), asparagine 166, asparagine 199, and 217–218 (ER) each bind substrate. The active-site Proton acceptor is the cysteine 226. Residue 227–228 (GS) coordinates substrate.

This sequence belongs to the diaminopimelate epimerase family. In terms of assembly, homodimer.

The protein resides in the cytoplasm. It carries out the reaction (2S,6S)-2,6-diaminopimelate = meso-2,6-diaminopimelate. It functions in the pathway amino-acid biosynthesis; L-lysine biosynthesis via DAP pathway; DL-2,6-diaminopimelate from LL-2,6-diaminopimelate: step 1/1. Its function is as follows. Catalyzes the stereoinversion of LL-2,6-diaminopimelate (L,L-DAP) to meso-diaminopimelate (meso-DAP), a precursor of L-lysine and an essential component of the bacterial peptidoglycan. In Afipia carboxidovorans (strain ATCC 49405 / DSM 1227 / KCTC 32145 / OM5) (Oligotropha carboxidovorans), this protein is Diaminopimelate epimerase.